A 200-amino-acid chain; its full sequence is 3-isopropylmalate dehydratase small subunit (200 aa).

Belongs to the LeuD family. LeuD type 1 subfamily. In terms of assembly, heterodimer of LeuC and LeuD.

It carries out the reaction (2R,3S)-3-isopropylmalate = (2S)-2-isopropylmalate. Its pathway is amino-acid biosynthesis; L-leucine biosynthesis; L-leucine from 3-methyl-2-oxobutanoate: step 2/4. In terms of biological role, catalyzes the isomerization between 2-isopropylmalate and 3-isopropylmalate, via the formation of 2-isopropylmaleate. The sequence is that of 3-isopropylmalate dehydratase small subunit from Vibrio vulnificus (strain CMCP6).